Reading from the N-terminus, the 141-residue chain is Nucleoside triphosphatase NudI (141 aa).

A Nudix hydrolase domain is found at 1-141 (MRQRTIVCPL…RHTLALKGLL (141 aa)). The short motif at 38 to 59 (GGVEPGERIEEALRREVREELG) is the Nudix box element.

It belongs to the Nudix hydrolase family. NudI subfamily. In terms of assembly, monomer. It depends on Mg(2+) as a cofactor.

The enzyme catalyses a ribonucleoside 5'-triphosphate + H2O = a ribonucleoside 5'-phosphate + diphosphate + H(+). The catalysed reaction is a 2'-deoxyribonucleoside 5'-triphosphate + H2O = a 2'-deoxyribonucleoside 5'-phosphate + diphosphate + H(+). It catalyses the reaction dUTP + H2O = dUMP + diphosphate + H(+). It carries out the reaction dTTP + H2O = dTMP + diphosphate + H(+). The enzyme catalyses dCTP + H2O = dCMP + diphosphate + H(+). Its function is as follows. Catalyzes the hydrolysis of nucleoside triphosphates, with a preference for pyrimidine deoxynucleoside triphosphates (dUTP, dTTP and dCTP). The protein is Nucleoside triphosphatase NudI of Salmonella agona (strain SL483).